The following is an 802-amino-acid chain: Ent-copalyl diphosphate synthase, chloroplastic (802 aa).

The transit peptide at 1-60 (MSLQYHVLNSIPSTTFLSSTKTTISSSFLTISGSPLNVARDKSRSGSIHCSKLRTQEYIN) directs the protein to the chloroplast. Lys-245 provides a ligand contact to substrate. Asp-377 and Asp-379 together coordinate Mg(2+). The short motif at 377 to 380 (DIDD) is the DXDD motif element. Lys-463 is a substrate binding site.

Belongs to the terpene synthase family. Tpsc subfamily. The cofactor is Mg(2+). In terms of processing, the N-terminus is blocked. As to expression, expressed in roots, leaves, flowers and also in siliques.

It is found in the plastid. The protein resides in the chloroplast. The catalysed reaction is (2E,6E,10E)-geranylgeranyl diphosphate = ent-copalyl diphosphate. It participates in plant hormone biosynthesis; gibberellin biosynthesis. Its activity is regulated as follows. Inhibited by high concentrations of magnesium. Functionally, catalyzes the conversion of geranylgeranyl diphosphate to the gibberellin precursor ent-copalyl diphosphate. This Arabidopsis thaliana (Mouse-ear cress) protein is Ent-copalyl diphosphate synthase, chloroplastic (GA1).